The chain runs to 455 residues: Glycosyl hydrolase family 109 protein (455 aa).

The tat-type signal signal peptide spans 1–33 (MAGIDRRGFLKASMASVAAAALAGCASQQGTSA). NAD(+)-binding positions include 62-63 (ER), D84, Q112, 133-136 (WALH), 153-154 (EV), and N182. Residues Y211, R230, 242-245 (YPTH), and Y324 each bind substrate. Residue Y242 coordinates NAD(+).

Belongs to the Gfo/Idh/MocA family. Glycosyl hydrolase 109 subfamily. NAD(+) serves as cofactor. In terms of processing, predicted to be exported by the Tat system. The position of the signal peptide cleavage has not been experimentally proven.

Glycosidase. This is Glycosyl hydrolase family 109 protein from Shewanella amazonensis (strain ATCC BAA-1098 / SB2B).